The sequence spans 368 residues: tRNA-specific 2-thiouridylase MnmA (368 aa).

Residues 11-18 (GMSGGVDS) and M37 contribute to the ATP site. Positions 97 to 99 (NPD) are interaction with target base in tRNA. C102 (nucleophile) is an active-site residue. A disulfide bridge connects residues C102 and C199. G127 contributes to the ATP binding site. The segment at 149–151 (KDQ) is interaction with tRNA. C199 (cysteine persulfide intermediate) is an active-site residue. The interval 311-312 (RY) is interaction with tRNA.

It belongs to the MnmA/TRMU family. In terms of assembly, interacts with TusE.

It localises to the cytoplasm. It carries out the reaction S-sulfanyl-L-cysteinyl-[protein] + uridine(34) in tRNA + AH2 + ATP = 2-thiouridine(34) in tRNA + L-cysteinyl-[protein] + A + AMP + diphosphate + H(+). Functionally, catalyzes the 2-thiolation of uridine at the wobble position (U34) of tRNA(Lys), tRNA(Glu) and tRNA(Gln), leading to the formation of s(2)U34, the first step of tRNA-mnm(5)s(2)U34 synthesis. Sulfur is provided by IscS, via a sulfur-relay system. Binds ATP and its substrate tRNAs. The chain is tRNA-specific 2-thiouridylase MnmA from Salmonella choleraesuis (strain SC-B67).